Reading from the N-terminus, the 274-residue chain is 2,3,4,5-tetrahydropyridine-2,6-dicarboxylate N-succinyltransferase (274 aa).

Substrate is bound by residues arginine 106 and aspartate 143.

The protein belongs to the transferase hexapeptide repeat family. In terms of assembly, homotrimer.

Its subcellular location is the cytoplasm. It carries out the reaction (S)-2,3,4,5-tetrahydrodipicolinate + succinyl-CoA + H2O = (S)-2-succinylamino-6-oxoheptanedioate + CoA. It participates in amino-acid biosynthesis; L-lysine biosynthesis via DAP pathway; LL-2,6-diaminopimelate from (S)-tetrahydrodipicolinate (succinylase route): step 1/3. This is 2,3,4,5-tetrahydropyridine-2,6-dicarboxylate N-succinyltransferase from Albidiferax ferrireducens (strain ATCC BAA-621 / DSM 15236 / T118) (Rhodoferax ferrireducens).